Consider the following 1779-residue polypeptide: Fibronectin type III domain-containing protein 1 (1779 aa).

Positions 1–29 are cleaved as a signal peptide; the sequence is MAPEARASPRLLLRAALLLLAALLPVASS. 4 Fibronectin type-III domains span residues 33 to 126, 103 to 203, 207 to 302, and 307 to 402; these read PVDH…KAPR, PNKP…AEED, VPED…TPES, and APEN…IPTT. Residues 400–413 are compositionally biased toward polar residues; it reads PTTSSTEASVQPNG. 4 disordered regions span residues 400 to 442, 459 to 1108, 1120 to 1227, and 1330 to 1401; these read PTTS…MPPA, NGVA…RNLD, EENT…KPNG, and PTTT…PPGT. Low complexity predominate over residues 423 to 437; it reads QQPSSSAPKVAASSQ. Residues 493–506 show a composition bias toward polar residues; the sequence is NPRSSRLETLNQKQ. Over residues 534-554 the composition is skewed to basic and acidic residues; it reads SRKEGMDRRGPSLDPHPHPRV. Polar residues-rich tracts occupy residues 557–570 and 590–607; these read SASSAYHQLSSTDN and SSGSSPKNPGRSRPTSAP. The segment covering 629–640 has biased composition (low complexity); it reads ASSSTSRQSHSS. Residue Ser-651 is modified to Phosphoserine. Low complexity predominate over residues 676 to 694; the sequence is HASSSHTTSRTASSSHPSA. Position 699 is a phosphoserine (Ser-699). Residues 707 to 720 are compositionally biased toward basic and acidic residues; the sequence is DSDRAAEDTIRRAE. Polar residues-rich tracts occupy residues 763–784 and 861–875; these read PSVSPQSTSASKVLTRSPSLPA and PLSSKAQGFQQSTTD. The segment covering 879–904 has biased composition (low complexity); sequence PQTSPASTSRQPSPARPPASRSQPSP. 2 stretches are compositionally biased toward polar residues: residues 957 to 971 and 1003 to 1020; these read APQNQNEGAQSTYED and VGSQSWSSDNRPQPSQAG. The segment covering 1085–1097 has biased composition (low complexity); the sequence is LSTSVKKWPSSSS. Over residues 1098–1108 the composition is skewed to basic and acidic residues; the sequence is PRDKYADRNLD. Composition is skewed to polar residues over residues 1147 to 1159 and 1166 to 1177; these read NPATASPIANTHS and RAPSSYSSTTPM. The segment covering 1330–1389 has biased composition (low complexity); that stretch reads PTTTMPPSTTTTTVPPTTTLPPTTTTTRRTTTTRRTTTTRRPTTTTRATRRTTTTTTTPE. One can recognise a Fibronectin type-III 5 domain in the interval 1543 to 1637; it reads APRNITVVAM…PSVSFVTESD (95 aa). Asn-1546 is a glycosylation site (N-linked (GlcNAc...) asparagine).

It is found in the secreted. In terms of biological role, may be an activator of G protein signaling. The sequence is that of Fibronectin type III domain-containing protein 1 (Fndc1) from Rattus norvegicus (Rat).